Here is a 784-residue protein sequence, read N- to C-terminus: LPS-assembly protein LptD (784 aa).

A signal peptide spans 1–24 (MKKRIPTLLATMIATALYSQQGLA). Cystine bridges form between C31/C724 and C173/C725.

It belongs to the LptD family. In terms of assembly, component of the lipopolysaccharide transport and assembly complex. Interacts with LptE and LptA. In terms of processing, contains two intramolecular disulfide bonds.

It localises to the cell outer membrane. Functionally, together with LptE, is involved in the assembly of lipopolysaccharide (LPS) at the surface of the outer membrane. This is LPS-assembly protein LptD from Escherichia coli O1:K1 / APEC.